The sequence spans 590 residues: G protein-coupled receptor kinase 5 (590 aa).

The tract at residues 1 to 185 is N-terminal; sequence MELENIVANT…LERQPVTKNT (185 aa). The interaction with calmodulin stretch occupies residues 20–39; the sequence is GGKRKGKSKKWKEILKFPHI. Residues 53-171 form the RGS domain; that stretch reads YYSLCDKQPI…LDSMYFDRFL (119 aa). Ser136 is subject to Phosphoserine. Positions 186–448 constitute a Protein kinase domain; it reads FRQYRVLGKG…AAEVKRHPFF (263 aa). Residues 192–200 and Lys215 contribute to the ATP site; that span reads LGKGGFGEV. The Proton acceptor role is filled by Asp311. The Nuclear localization signal motif lies at 388-395; the sequence is RKEKVKRE. Positions 449–514 constitute an AGC-kinase C-terminal domain; sequence RNMNFKRLEA…GSVPIPWQNE (66 aa). Ser484 bears the Phosphoserine; by autocatalysis mark. Thr485 bears the Phosphothreonine; by autocatalysis mark. The segment at 546-565 is sufficient for membrane localization; that stretch reads PKKGLFHRLFRRQHQSNSKS. The segment at 557–590 is disordered; sequence RQHQSNSKSSPTPKTSCNHRINSNHINSNSTGSS. The segment covering 561 to 590 has biased composition (low complexity); that stretch reads SNSKSSPTPKTSCNHRINSNHINSNSTGSS. Ser579 carries the post-translational modification Phosphoserine.

It belongs to the protein kinase superfamily. AGC Ser/Thr protein kinase family. GPRK subfamily. In terms of assembly, interacts with ST13 (via the C-terminus 303-319 AA). Interacts with TP53/p53. Interacts with HTR4 (via C-terminus 330-346 AA); this interaction is promoted by 5-HT (serotonin). Interacts with HDAC5. Interacts with GIT1. In terms of processing, autophosphorylated. Autophosphorylation may play a critical role in the regulation of GRK5 kinase activity.

Its subcellular location is the cytoplasm. It is found in the nucleus. The protein resides in the cell membrane. The catalysed reaction is [G-protein-coupled receptor] + ATP = [G-protein-coupled receptor]-phosphate + ADP + H(+). With respect to regulation, inhibited by calmodulin with an IC(50) of 50 nM. Calmodulin inhibits GRK5 association with receptor and phospholipid. Serine/threonine kinase that phosphorylates preferentially the activated forms of a variety of G-protein-coupled receptors (GPCRs). Such receptor phosphorylation initiates beta-arrestin-mediated receptor desensitization, internalization, and signaling events leading to their down-regulation. Phosphorylates a variety of GPCRs, including adrenergic receptors, muscarinic acetylcholine receptors (more specifically Gi-coupled M2/M4 subtypes), dopamine receptors and opioid receptors. In addition to GPCRs, also phosphorylates various substrates: Hsc70-interacting protein/ST13, TP53/p53, HDAC5, and arrestin-1/ARRB1. Phosphorylation of ARRB1 by GRK5 inhibits G-protein independent MAPK1/MAPK3 signaling downstream of 5HT4-receptors. Phosphorylation of HDAC5, a repressor of myocyte enhancer factor 2 (MEF2) leading to nuclear export of HDAC5 and allowing MEF2-mediated transcription. Phosphorylation of TP53/p53, a crucial tumor suppressor, inhibits TP53/p53-mediated apoptosis. Phosphorylation of ST13 regulates internalization of the chemokine receptor. Phosphorylates rhodopsin (RHO) (in vitro) and a non G-protein-coupled receptor, LRP6 during Wnt signaling (in vitro). This is G protein-coupled receptor kinase 5 (Grk5) from Mus musculus (Mouse).